Consider the following 319-residue polypeptide: uncharacterized protein (319 aa).

Positions 36–178 (IIEFLLSFKG…MTVIHEERGF (143 aa)) constitute an SIS domain. 51-56 (GIGKSG) serves as a coordination point for ATP. CBS domains are found at residues 203-263 (MRSG…HLKT) and 268-319 (MTKN…MGVS).

The protein belongs to the SIS family. GutQ/KpsF subfamily.

This is an uncharacterized protein from Rickettsia prowazekii (strain Madrid E).